Reading from the N-terminus, the 688-residue chain is Elongation factor G (688 aa).

Residues 8-282 (EKFRNFGIMA…GVVDYLPSPL (275 aa)) form the tr-type G domain. GTP contacts are provided by residues 17 to 24 (AHIDAGKT), 81 to 85 (DTPGH), and 135 to 138 (NKMD).

It belongs to the TRAFAC class translation factor GTPase superfamily. Classic translation factor GTPase family. EF-G/EF-2 subfamily.

Its subcellular location is the cytoplasm. Functionally, catalyzes the GTP-dependent ribosomal translocation step during translation elongation. During this step, the ribosome changes from the pre-translocational (PRE) to the post-translocational (POST) state as the newly formed A-site-bound peptidyl-tRNA and P-site-bound deacylated tRNA move to the P and E sites, respectively. Catalyzes the coordinated movement of the two tRNA molecules, the mRNA and conformational changes in the ribosome. In Clostridium perfringens (strain ATCC 13124 / DSM 756 / JCM 1290 / NCIMB 6125 / NCTC 8237 / Type A), this protein is Elongation factor G.